The following is a 612-amino-acid chain: Transcription factor unc-37 (612 aa).

The segment at 143–228 is disordered; that stretch reads FASPHVNGGD…SNSRARQQQQ (86 aa). Over residues 150 to 159 the composition is skewed to gly residues; that stretch reads GGDGAGGSSG. A CCN domain region spans residues 153–196; sequence GAGGSSGGASEAKKAKLEDPDDGELEIDVTNDDHPSTASNGGAA. Residues 171–182 show a composition bias toward acidic residues; the sequence is DPDDGELEIDVT. The segment covering 202-221 has biased composition (polar residues); sequence DSTNSVASSGASTPSIASNS. WD repeat units lie at residues 308 to 339, 372 to 402, 414 to 444, 456 to 486, 538 to 568, and 579 to 609; these read GIPTGLKKKMELNHGEVVCAATISRDNSRVYT, LKENYIRSCKLFEDGNTLLIGGEASTVALWD, TDSQACYALAMSPDEKLLFACLADGNILIYD, GHQDGASCLDLSKDGTKLWSGGLDNSVRCWD, QHESCVLSLKFAHSGKFFISTGKDNALNAWR, and KENSSVLSCDISFDDSLIVTGSGEKKATLYA.

The protein belongs to the WD repeat Groucho/TLE family. Interacts with unc-4. Interacts with ref-1. May interact with mls-1.

It is found in the nucleus. Its function is as follows. Transcriptional corepressor that functions with the neural specificity gene unc-4 to govern motor neuron identity. In concert with unc-4, represses the expression of VB-specific genes such as ceh-12, thereby preventing the adoption of VB motor neuron fate. May function with transcription factor mls-1 to promote uterine muscle specification and formation. The sequence is that of Transcription factor unc-37 (unc-37) from Caenorhabditis elegans.